A 296-amino-acid chain; its full sequence is Galectin-3 (296 aa).

A compositionally biased stretch (polar residues) spans 1–11; sequence MADSFSLNDAL. The segment at 1–150 is disordered; sequence MADSFSLNDA…PSAPGAYPAA (150 aa). Ala2 is subject to N-acetylalanine. 2 positions are modified to phosphoserine; by CK1: Ser6 and Ser12. 2 stretches are compositionally biased toward low complexity: residues 12-31 and 38-47; these read SGSG…NQPA and GASYPGAYPG. A run of 8 repeats spans residues 36–44, 45–53, 54–62, 63–71, 72–80, 81–89, 90–98, and 99–107. The tract at residues 36-143 is 12 X 9 AA tandem repeats of Y-P-G-X(3)-P-G-[GAT]; sequence YPGASYPGAY…AYPPPGQPSA (108 aa). The span at 48 to 120 shows a compositional bias: pro residues; sequence QAPPGGYPGQ…PTAPAYPGPT (73 aa). One copy of the 9; approximate repeat lies at 108 to 115; sequence YPGPTAPA. Residues 116 to 124 form repeat 10; sequence YPGPTAPGT. The span at 121-133 shows a compositional bias: low complexity; the sequence is APGTQPGQPSGPG. The 11; approximate repeat unit spans residues 125–134; that stretch reads QPGQPSGPGA. One copy of the 12; approximate repeat lies at 135 to 143; sequence YPPPGQPSA. The 131-residue stretch at 164 to 294 folds into the Galectin domain; the sequence is YDLPLPGGVK…DIDLTSASYA (131 aa). 227 to 233 lines the a beta-D-galactoside pocket; sequence WGKEERQ. The Nuclear export signal signature appears at 272–287; it reads KNLPEISKLGISGDID.

As to quaternary structure, probably forms homo- or heterodimers. Interacts with DMBT1. Interacts with CD6 and ALCAM. Forms a complex with the ITGA3, ITGB1 and CSPG4. Interacts with LGALS3BP, LYPD3, ZFTRAF1 and UACA. Interacts with TRIM16; this interaction mediates autophagy of damage endomembranes. Interacts with cargo receptor TMED10; the interaction mediates the translocation from the cytoplasm into the ERGIC (endoplasmic reticulum-Golgi intermediate compartment) and thereby secretion. Interacts with and inhibits by binding NCR3/NKp30. In terms of processing, the degree of phosphorylation is higher in the cytoplasmic form than in the nuclear form. In protein isolated from a canine kidney cell line, 90% of the phosphate was on Ser-6 and 10% was on Ser-12.

It localises to the cytoplasm. The protein localises to the nucleus. The protein resides in the secreted. Its function is as follows. Galactose-specific lectin which binds IgE. May mediate with the alpha-3, beta-1 integrin the stimulation by CSPG4 of endothelial cells migration. Together with DMBT1, required for terminal differentiation of columnar epithelial cells during early embryogenesis. In the nucleus: acts as a pre-mRNA splicing factor. Involved in acute inflammatory responses including neutrophil activation and adhesion, chemoattraction of monocytes macrophages, opsonization of apoptotic neutrophils, and activation of mast cells. Together with TRIM16, coordinates the recognition of membrane damage with mobilization of the core autophagy regulators ATG16L1 and BECN1 in response to damaged endomembranes. When secreted, interacts with NK cell-activating receptor NCR3/NKp30 acting as an inhibitory ligand which antagonizes NK cell attack. This Canis lupus familiaris (Dog) protein is Galectin-3 (LGALS3).